Consider the following 147-residue polypeptide: AP-2 complex subunit sigma (147 aa).

The protein belongs to the adaptor complexes small subunit family. In terms of assembly, adaptor protein complex 2 (AP-2) is a heterotetramer composed of two large adaptins (alpha-type subunit APL3 and beta-type subunit APL1), a medium chain (mu-type subunit APM4) and a small adaptin (sigma-type subunit APS2). Interacts with APL1.

The protein localises to the cell membrane. It localises to the membrane. It is found in the coated pit. Its function is as follows. Component of the adaptor complexes which link clathrin to receptors in coated vesicles. Clathrin-associated protein complexes are believed to interact with the cytoplasmic tails of membrane proteins, leading to their selection and concentration. The chain is AP-2 complex subunit sigma (APS2) from Saccharomyces cerevisiae (strain ATCC 204508 / S288c) (Baker's yeast).